Consider the following 1193-residue polypeptide: MRFVQGNIMPGKLVGSPKGAARTGTQAIAHAGDHSDLDEPKPKIAKSDPPSTAIPKKNNFKQREGTKNVKPPTLEEMKELRDTQNLFHSNLFKLQVKEMLEELQLKQKYTDFIENWLESFTAFTRQLKDGLMERTHLEVPMKLSEKPTGFVFSKPTREPYLIGAAATGTLLGPKIVVDVALEMPKESLHKEDYLNLRYDQKRALYLTYVTERMMESPDYAEDQFNFNYYANNPLKPVLELIPVTKQVNKHLQVRLFITAPLSSFKPGRFVPWNNNIRPSFYGDEWDEKDPLPSTQHYNANVLFDLTLSENQAQLDKAFKSRRNFQDGLLLLKVWLRQRQLDIGYSGFGAHILAAFIVYLNTQRILHQSSSSYQVARTVWNQLANTDWTKGISLSVAPIQTEELNKFAEHYDVCFIDFTGQHNLCANIPLYLYQRVREEAKLAVELLNDMKLNSFPLIFMQKCPLYSRVDNILKISNYSCINQMLTLHSHPRIKYDFANYGYPQLLHLLTELLKKGLAERVHSILPLETATAAWPVEKKAPVIGKYIQLGLILQPEHAYQVLNKGPAANDDHEGAEEFRRFWGEKSNLRRFQDGSITEAVVWGTAQDSPAKKRLIVRQIVLHLLEHHLQLDSKEVQYIGGELDQVYQLSPWFKVNKLKTKLPLGQDTDAEALSPHVIRCYDELARQLHGLNDLPLEIVSISGVSPIFRYCEPQPVLPQALLVENRILASSIQRVVIQLGQSGKWPTELGALRALKTAFLIEIGEKLEAQCRLHWVMSADGLLVLKQGYCFLIELAHNKELALLKQEVTERGITTYIDNAASRSLERQHYILPKVSGALHSLHQTYSAFGSTVLLAKRWLATQLLDDGLWPDMATELLVAHLFQQRYAPQSIAAPQTGFIRFLQLLSHSDFNGELFLLNFNNSWQEQQIADLEHNYRSNRQSYPPLAVATSYDMQHAGRLWTSDQSPSQRVLGHVTRLARHALEIIETSLMSKDLRFVRPAQLFRASNEGYDLVIQFKPDLVPNSLSYDLGSPFVSFSQPNFSLPRAGSDYIARIVGLLRSAYSDFAAFFYNPHGGKELGIVWRPPTEFAAKPFKVTELQACSPCGNKKVQVLKETLLEDFKLLLKDFYLRIATPEELKREQREHQKPMRYFDANKAEEESKPKPKKHRQRKGTGKKALPKRKRLIKSSTLKVLK.

Disordered stretches follow at residues 1-69 and 1137-1193; these read MRFV…TKNV and KREQ…KVLK. Composition is skewed to basic and acidic residues over residues 31 to 46 and 1151 to 1161; these read AGDHSDLDEPKPKIAK and DANKAEEESKP. Serine 35 carries the post-translational modification Phosphoserine. Over residues 1162 to 1184 the composition is skewed to basic residues; sequence KPKKHRQRKGTGKKALPKRKRLI.

It belongs to the NRAP family. As to quaternary structure, part of the small subunit (SSU) processome, composed of more than 70 proteins and the RNA chaperone small nucleolar RNA (snoRNA) U3. Expressed in nurse cells at stages 9-10 of oogenesis and exported to the oocyte.

The protein localises to the nucleus. It is found in the nucleolus. The protein resides in the chromosome. In terms of biological role, part of the small subunit (SSU) processome, first precursor of the small eukaryotic ribosomal subunit. During the assembly of the SSU processome in the nucleolus, many ribosome biogenesis factors, an RNA chaperone and ribosomal proteins associate with the nascent pre-rRNA and work in concert to generate RNA folding, modifications, rearrangements and cleavage as well as targeted degradation of pre-ribosomal RNA by the RNA exosome. The sequence is that of Nucleolar protein 6 from Drosophila melanogaster (Fruit fly).